Reading from the N-terminus, the 125-residue chain is Small ribosomal subunit protein uS12 (125 aa).

Residues 1-26 form a disordered region; it reads MPTINQLVRKSRKTVKAQSDSPALKN. Asp-89 is subject to 3-methylthioaspartic acid.

Belongs to the universal ribosomal protein uS12 family. As to quaternary structure, part of the 30S ribosomal subunit. Contacts proteins S8 and S17. May interact with IF1 in the 30S initiation complex.

Functionally, with S4 and S5 plays an important role in translational accuracy. In terms of biological role, interacts with and stabilizes bases of the 16S rRNA that are involved in tRNA selection in the A site and with the mRNA backbone. Located at the interface of the 30S and 50S subunits, it traverses the body of the 30S subunit contacting proteins on the other side and probably holding the rRNA structure together. The combined cluster of proteins S8, S12 and S17 appears to hold together the shoulder and platform of the 30S subunit. The chain is Small ribosomal subunit protein uS12 from Clostridium tetani (strain Massachusetts / E88).